Reading from the N-terminus, the 354-residue chain is Endo-1,4-beta-xylanase 1 (354 aa).

The GH10 domain maps to 19-339 (SGLDAAMKAA…KPSYTSSLNT (321 aa)). N117 carries N-linked (GlcNAc...) asparagine glycosylation. The Proton donor role is filled by E147. The active-site Nucleophile is E261. A disulfide bridge connects residues C289 and C295.

This sequence belongs to the glycosyl hydrolase 10 (cellulase F) family.

Its subcellular location is the secreted. The catalysed reaction is Endohydrolysis of (1-&gt;4)-beta-D-xylosidic linkages in xylans.. It functions in the pathway glycan degradation; xylan degradation. In terms of biological role, endo-1,4-beta-xylanase involved in the hydrolysis of xylan, a major structural heterogeneous polysaccharide found in plant biomass representing the second most abundant polysaccharide in the biosphere, after cellulose. Plays an important role in causing fusarium head blight (FHB) on cereal crops. In Gibberella zeae (strain ATCC MYA-4620 / CBS 123657 / FGSC 9075 / NRRL 31084 / PH-1) (Wheat head blight fungus), this protein is Endo-1,4-beta-xylanase 1 (XYL1).